The following is a 494-amino-acid chain: MFGLFRSKAPEAPPKHPTDTIIPLNAADDTEVLRSVVVVLSYRFDDVLDPVKLKSSFEKLLDRPGWRKIGARLRLNDNGRLEYHIPERYDEKRPIVTWSHVSHNVSVLKHPLSSKLPRASARPAVVGDPNDFDELTSSPEAPKTLHDYLTRDVPQLCLHVVSFTDSTLVSISLPHTLTDGTGGAQIYRCWALVLQDRDDEVPPFHGYDSDPLATFGETSSQPYMYDPKLLTGWRKWLFILYQVYDGWRYRTSSRIVCVPGPYLAAQRKKAIEEIRAETGNDKAFVSDNDVLTAWFTRLAVGHYPRNSNLTVRIMNAFALASVLGNDRLPSTKAFISNAATEIYTFLSVRDFFTKPLSYAAYAIRRSMMEGGTREQVEALQAVKKQTLAREGHTWPIFGDASMEMMSYSNWTKGKYFETDFSAAIVKEGFAREARAEKPGFASMVQFNAWSTKFDLRNLMPIMGKDAAGNYWLQGPLRDVVWKRIEKELREEPLQ.

Its subcellular location is the nucleus. Transcription co-regulator that might be involved in the regulation of the expression of the gene cluster that mediates the biosynthesis of calbistrins and related compounds such as decumbenones. Calbistrin A is a secondary metabolite with an interesting structure that was recently found to have bioactivity against leukemia cells. It consists of two polyketides linked by an ester bond: a bicyclic decalin containing polyketide and a linear 12 carbon dioic acid structure. In Penicillium decumbens, this protein is Transcriptional regulator calD.